The primary structure comprises 1434 residues: Probable ATP-dependent RNA helicase spindle-E (1434 aa).

Residues 126 to 295 (INAINENPVV…FANESSAPPV (170 aa)) form the Helicase ATP-binding domain. 139-146 (GETGCGKT) is an ATP binding site. A DEAH box motif is present at residues 241-244 (DEVH). Positions 356–527 (TGKSYNQSLR…NCVLKAKELK (172 aa)) constitute a Helicase C-terminal domain. In terms of domain architecture, Tudor spans 936–999 (AGAITKGLML…RLMSQDLLRH (64 aa)).

Belongs to the DEAD box helicase family. DEAH subfamily.

It is found in the cytoplasm. The enzyme catalyses ATP + H2O = ADP + phosphate + H(+). In terms of biological role, probable ATP-binding RNA helicase which plays a central role during spermatogenesis and oogenesis by repressing transposable elements and preventing their mobilization, which is essential for the germline integrity. Acts via the piRNA metabolic process, which mediates the repression of transposable elements during meiosis by forming complexes composed of piRNAs and Piwi and govern the methylation and subsequent repression of transposons. Involved in the repression of LTR retrotransposon copia. Also involved in telomere regulation by repressing specialized telomeric retroelements HeT-A, TAHRE, and TART; Drosophila telomeres being maintained by transposition of specialized telomeric retroelements. Involved in telomeric trans-silencing, a repression mechanism by which a transposon or a transgene inserted in subtelomeric heterochromatin has the capacity to repress in trans in the female germline, a homologous transposon, or transgene located in euchromatin. Involved in the repression of testis-expressed Stellate genes by the homologous Su(Ste) repeats. Required for anteroposterior and dorsoventral axis formation during oogenesis. This chain is Probable ATP-dependent RNA helicase spindle-E (spn-E), found in Drosophila persimilis (Fruit fly).